The primary structure comprises 108 residues: Small ribosomal subunit protein uS10 (108 aa).

It belongs to the universal ribosomal protein uS10 family. As to quaternary structure, part of the 30S ribosomal subunit.

Functionally, involved in the binding of tRNA to the ribosomes. This chain is Small ribosomal subunit protein uS10, found in Rhodopirellula baltica (strain DSM 10527 / NCIMB 13988 / SH1).